The primary structure comprises 843 residues: Phosphatidylinositol-glycan-specific phospholipase D (843 aa).

The first 23 residues, 1-23 (MSVGRLWSGLLLLLLFFCSRSSS), serve as a signal peptide directing secretion. Asn-94, Asn-271, Asn-292, Asn-308, and Asn-322 each carry an N-linked (GlcNAc...) asparagine glycan. FG-GAP repeat units lie at residues 368-429 (SPSA…GLPP), 435-498 (DKEA…GRLS), 500-560 (SPNI…RNDK), 564-625 (TLDE…SLGR), 635-695 (QREI…GATR), 707-773 (ALFS…TLGD), and 791-843 (QYVL…FSSD). N-linked (GlcNAc...) asparagine glycosylation is found at Asn-483, Asn-502, Asn-592, Asn-605, and Asn-661.

It belongs to the GPLD1 family. Monomer. In terms of processing, glycosylated.

It is found in the secreted. The enzyme catalyses a 6-(alpha-D-glucosaminyl)-1-(1,2-diacyl-sn-glycero-3-phospho)-1D-myo-inositol + H2O = 6-(alpha-D-glucosaminyl)-1D-myo-inositol + a 1,2-diacyl-sn-glycero-3-phosphate + H(+). This protein hydrolyzes the inositol phosphate linkage in proteins anchored by phosphatidylinositol glycans (GPI-anchor) thus releasing these proteins from the membrane. The protein is Phosphatidylinositol-glycan-specific phospholipase D (Gpld1) of Rattus norvegicus (Rat).